Here is a 65-residue protein sequence, read N- to C-terminus: Large ribosomal subunit protein bL35 (65 aa).

It belongs to the bacterial ribosomal protein bL35 family.

This is Large ribosomal subunit protein bL35 from Prochlorococcus marinus (strain MIT 9301).